The following is a 341-amino-acid chain: Guanine nucleotide-binding protein subunit beta (341 aa).

WD repeat units follow at residues 54 to 84 (GHLA…IVWD), 96 to 126 (LRSS…SIYS), 142 to 171 (GHTG…ALWN), 183 to 213 (GHTG…KLFD), 225 to 255 (GHES…RLFD), 269 to 299 (NIIC…NVWD), and 311 to 341 (GHDN…KIWN).

The protein belongs to the WD repeat G protein beta family. G proteins are composed of 3 units, alpha, beta and gamma.

Guanine nucleotide-binding proteins (G proteins) are involved as a modulator or transducer in various transmembrane signaling systems. The beta and gamma chains are required for the GTPase activity, for replacement of GDP by GTP, and for G protein-effector interaction. In Loligo forbesii (Veined squid), this protein is Guanine nucleotide-binding protein subunit beta.